We begin with the raw amino-acid sequence, 181 residues long: Photosystem I assembly protein Ycf4 (181 aa).

Helical transmembrane passes span 19–41 and 61–83; these read YAWCFILMTGGIGFCLTGVGSYF and IVMMFYGTIAILFSLFLMYSIFT.

This sequence belongs to the Ycf4 family.

It is found in the plastid. The protein resides in the chloroplast thylakoid membrane. In terms of biological role, seems to be required for the assembly of the photosystem I complex. In Guillardia theta (Cryptophyte), this protein is Photosystem I assembly protein Ycf4.